Here is a 731-residue protein sequence, read N- to C-terminus: Nucleolar GTP-binding protein 2 (731 aa).

At M1 the chain carries N-acetylmethionine. Residues 1-33 (MVKPKYKGRSTINPSKASTNPDRVQGAGGQNMR) are disordered. Over residues 10–22 (STINPSKASTNPD) the composition is skewed to polar residues. One can recognise a CP-type G domain in the interval 207–368 (WGELYKVIDS…LIDCPGVVYP (162 aa)). GTP is bound by residues 317 to 324 (GYPNVGKS) and 361 to 365 (DCPGV). A disordered region spans residues 481 to 502 (VVPEAAQNNPGEEVTETAGEGS). Position 504 is a phosphoserine (S504). Residues 555-589 (LEEELESFSDEEEEEQEQQRDDAEESSSEPEEENV) show a composition bias toward acidic residues. Disordered stretches follow at residues 555 to 594 (LEEELESFSDEEEEEQEQQRDDAEESSSEPEEENVGNDTK) and 630 to 731 (EKIF…RQKQ). Basic and acidic residues-rich tracts occupy residues 630 to 652 (EKIFAKPEEQRKTLEEDVDDRAP) and 662 to 671 (QREEEQEHSN). Composition is skewed to basic residues over residues 681 to 695 (ERRRAVRQQRPKKVG) and 721 to 731 (KHKRKKFRQKQ).

This sequence belongs to the TRAFAC class YlqF/YawG GTPase family. NOG2 subfamily. In terms of assembly, interacts with LYAR and RPL23A. Interacts with the nuclear importin-beta receptor and, at a lower extent, with importin-alpha. Widely expressed, with the highest expression level in testis.

It localises to the nucleus. The protein localises to the nucleolus. In terms of biological role, GTPase that associates with pre-60S ribosomal subunits in the nucleolus and is required for their nuclear export and maturation. May promote cell proliferation possibly by increasing p53/TP53 protein levels, and consequently those of its downstream product CDKN1A/p21, and decreasing RPL23A protein levels. This chain is Nucleolar GTP-binding protein 2 (GNL2), found in Homo sapiens (Human).